A 162-amino-acid polypeptide reads, in one-letter code: UPF0303 protein Arad_3071 (162 aa).

This sequence belongs to the UPF0303 family.

This is UPF0303 protein Arad_3071 from Rhizobium rhizogenes (strain K84 / ATCC BAA-868) (Agrobacterium radiobacter).